A 474-amino-acid chain; its full sequence is Shugoshin-1 (474 aa).

Disordered regions lie at residues 1 to 53 (MTST…KPNA), 189 to 226 (VESQ…NQGS), 322 to 356 (NSKQ…RCSK), and 422 to 442 (VSME…RKSN). Composition is skewed to polar residues over residues 12 to 22 (GSLNPPHSNPS) and 190 to 201 (ESQSAVSSNTVC). The segment covering 211–220 (KRMPQRRRSS) has biased composition (basic residues). 2 stretches are compositionally biased toward polar residues: residues 322–341 (NSKQ…NTVD) and 422–431 (VSMEQRTNQE).

This sequence belongs to the shugoshin family. Highly expressed in tissues containing meiocytes. Expressed at much lower level in leaves and pollen-containing flowers.

The protein localises to the nucleus. Its subcellular location is the chromosome. The protein resides in the centromere. Functionally, plays a central role in chromosome cohesion during meiosis I by preventing premature dissociation of cohesin complex from centromeres after prophase, when most of cohesin complex dissociates from chromosomes arms. Required for maintenance of centromeric cohesion before prophase II and correct segregation of chromatids during meiosis II. Has apparently no function in mitosis. The protein is Shugoshin-1 of Zea mays (Maize).